The following is a 403-amino-acid chain: Protein-export membrane protein SecD (403 aa).

Transmembrane regions (helical) follow at residues 13–33 (LLVI…KGVN), 245–265 (FLKM…VIIA), 285–305 (VVFL…PALA), 306–326 (GIIL…DEIV), 347–367 (VVLA…VAGM), and 368–388 (GLLK…VVIT).

It belongs to the SecD/SecF family. SecD subfamily. As to quaternary structure, part of the protein translocation apparatus. Forms a complex with SecF.

The protein resides in the cell membrane. Functionally, involved in protein export. The polypeptide is Protein-export membrane protein SecD (Methanopyrus kandleri (strain AV19 / DSM 6324 / JCM 9639 / NBRC 100938)).